The primary structure comprises 506 residues: Apolipoprotein N-acyltransferase (506 aa).

6 helical membrane-spanning segments follow: residues 26-46 (FAPY…LILI), 66-86 (FASG…MPLA), 89-109 (LFLM…FTWS), 113-133 (FFAK…WLIA), 166-186 (GVEL…YAVI), and 192-212 (MLLI…WDWV). Positions 225–471 (IQGNVDQNLK…TAVLRAELTP (247 aa)) constitute a CN hydrolase domain. E264 serves as the catalytic Proton acceptor. The active site involves K330. C382 functions as the Nucleophile in the catalytic mechanism. The helical transmembrane segment at 479–499 (HQLGSWPLYIWVALSLALAWW) threads the bilayer.

The protein belongs to the CN hydrolase family. Apolipoprotein N-acyltransferase subfamily.

It localises to the cell inner membrane. It catalyses the reaction N-terminal S-1,2-diacyl-sn-glyceryl-L-cysteinyl-[lipoprotein] + a glycerophospholipid = N-acyl-S-1,2-diacyl-sn-glyceryl-L-cysteinyl-[lipoprotein] + a 2-acyl-sn-glycero-3-phospholipid + H(+). It functions in the pathway protein modification; lipoprotein biosynthesis (N-acyl transfer). Catalyzes the phospholipid dependent N-acylation of the N-terminal cysteine of apolipoprotein, the last step in lipoprotein maturation. In Vibrio vulnificus (strain CMCP6), this protein is Apolipoprotein N-acyltransferase.